The chain runs to 434 residues: MINQLINWQELSPQQKNSALARPAIADSALLSTQVANILSQVKNQGDKAILALTEQFDGIALSTLSVSSAQVAQAKLALTDKRLKAIHTAYKQIKSFHSAQTASDITVETTPGVKCTLKTEAIESVGLYIPAGSAPLPSTVLMLGVPAQLTGCQRTVLVCPPDKNGQLADEILVAADLCGITEIYTVGGAQAIAALAYGTETIPAVNKVFGPGNRYVTEAKTQLSQQVAGFAIDMPAGPSEVLVIADGQANPAFIAADLLSQAEHGVDSQVILLSDSESLISKVSTEIAQQLTLLSRCKIAEQALKQSRLILTKDLAQAVEVSNEYGPEHLIIQTEDAPTLLSKLRNAGSIFVGAYTPESAGDYASGTNHVLPTYGYSKVISSLSLADFSRRFTVQEITKAGLQSLAECIIELTDAEGLDAHQRAVTIRLEEGS.

NAD(+) contacts are provided by Y129, Q191, and N214. Residues S240, Q262, and H265 each contribute to the substrate site. Residues Q262 and H265 each contribute to the Zn(2+) site. Residues E329 and H330 each act as proton acceptor in the active site. Substrate is bound by residues H330, D363, E417, and H422. Residue D363 participates in Zn(2+) binding. H422 contacts Zn(2+).

This sequence belongs to the histidinol dehydrogenase family. Zn(2+) serves as cofactor.

It carries out the reaction L-histidinol + 2 NAD(+) + H2O = L-histidine + 2 NADH + 3 H(+). It participates in amino-acid biosynthesis; L-histidine biosynthesis; L-histidine from 5-phospho-alpha-D-ribose 1-diphosphate: step 9/9. Its function is as follows. Catalyzes the sequential NAD-dependent oxidations of L-histidinol to L-histidinaldehyde and then to L-histidine. The polypeptide is Histidinol dehydrogenase (Colwellia psychrerythraea (strain 34H / ATCC BAA-681) (Vibrio psychroerythus)).